A 469-amino-acid chain; its full sequence is Probable periplasmic serine endoprotease DegP-like (469 aa).

A signal peptide spans 1 to 25 (MKVCQKYTAVLLVWLSAVVSMRAGA). Catalysis depends on charge relay system residues histidine 108, aspartate 138, and serine 211. Substrate-binding positions include 209-211 (GNS) and 266-270 (LGVLI). 2 PDZ domains span residues 255 to 346 (LKDT…VRRG) and 352 to 457 (AVEI…IRQG).

It belongs to the peptidase S1C family.

The protein resides in the periplasm. It carries out the reaction Acts on substrates that are at least partially unfolded. The cleavage site P1 residue is normally between a pair of hydrophobic residues, such as Val-|-Val.. Its function is as follows. Might be efficient in the degradation of transiently denatured and unfolded proteins which accumulate in the periplasm following stress conditions. This Hahella chejuensis (strain KCTC 2396) protein is Probable periplasmic serine endoprotease DegP-like (mucD).